Here is a 142-residue protein sequence, read N- to C-terminus: Large ribosomal subunit protein uL11 (142 aa).

This sequence belongs to the universal ribosomal protein uL11 family. As to quaternary structure, part of the ribosomal stalk of the 50S ribosomal subunit. Interacts with L10 and the large rRNA to form the base of the stalk. L10 forms an elongated spine to which L12 dimers bind in a sequential fashion forming a multimeric L10(L12)X complex. One or more lysine residues are methylated.

Forms part of the ribosomal stalk which helps the ribosome interact with GTP-bound translation factors. In Vibrio vulnificus (strain CMCP6), this protein is Large ribosomal subunit protein uL11.